The following is a 174-amino-acid chain: Urease accessory protein UreE (174 aa).

It belongs to the UreE family.

The protein localises to the cytoplasm. In terms of biological role, involved in urease metallocenter assembly. Binds nickel. Probably functions as a nickel donor during metallocenter assembly. The polypeptide is Urease accessory protein UreE (Helicobacter hepaticus (strain ATCC 51449 / 3B1)).